Here is a 349-residue protein sequence, read N- to C-terminus: 6-phosphogluconolactonase (349 aa).

A disordered region spans residues 125-151 (LQSPVSEAAHTGKGPHERQEKPHTHYA). Basic and acidic residues predominate over residues 138 to 147 (GPHERQEKPH).

It belongs to the cycloisomerase 2 family.

The enzyme catalyses 6-phospho-D-glucono-1,5-lactone + H2O = 6-phospho-D-gluconate + H(+). It participates in carbohydrate degradation; pentose phosphate pathway; D-ribulose 5-phosphate from D-glucose 6-phosphate (oxidative stage): step 2/3. In terms of biological role, catalyzes the hydrolysis of 6-phosphogluconolactone to 6-phosphogluconate. The polypeptide is 6-phosphogluconolactonase (pgl) (Bacillus subtilis (strain 168)).